The sequence spans 811 residues: E3 ubiquitin-protein ligase RNF10 (811 aa).

The segment covering 1–10 has biased composition (polar residues); that stretch reads MPLSSPNAAA. Residues 1-119 form a disordered region; sequence MPLSSPNAAA…SFNGGRRDEV (119 aa). S5 carries the post-translational modification Phosphoserine. Low complexity-rich tracts occupy residues 18 to 31, 78 to 90, and 104 to 113; these read NSGSNSSSASSGSS, NNQSRRSSSQKSK, and SKLFSSSFNG. An interaction with MEOX2 region spans residues 101–185; sequence GGSSKLFSSS…FNKELFLQAN (85 aa). 2 positions are modified to phosphoserine: S110 and S128. An RING-type zinc finger spans residues 225–267; sequence CPICLYPPTAAKITRCGHIFCWACILHYLSLSEKTWSKCPICY. The segment covering 653 to 662 has biased composition (polar residues); it reads DSALGPTSTE. Disordered stretches follow at residues 653–672, 724–761, and 776–811; these read DSALGPTSTEGHGALSISPL, DVWPKTAPKKDENSLVPPAPVDSDGESDNSDRVPVPSF, and LDTPATSDPLSEEKGGKKRKKQKQKLLFSTSVVHTK. A compositionally biased stretch (basic and acidic residues) spans 724-736; sequence DVWPKTAPKKDEN. Residues 802-811 show a composition bias toward polar residues; it reads LFSTSVVHTK.

Belongs to the RNF10 family. As to quaternary structure, interacts with MEOX2.

It is found in the cytoplasm. The protein localises to the nucleus. It catalyses the reaction S-ubiquitinyl-[E2 ubiquitin-conjugating enzyme]-L-cysteine + [acceptor protein]-L-lysine = [E2 ubiquitin-conjugating enzyme]-L-cysteine + N(6)-ubiquitinyl-[acceptor protein]-L-lysine.. It functions in the pathway protein modification; protein ubiquitination. In terms of biological role, E3 ubiquitin-protein ligase that catalyzes monoubiquitination of 40S ribosomal proteins RPS2/us5 and RPS3/us3 in response to ribosome stalling. Part of a ribosome quality control that takes place when ribosomes have stalled during translation initiation (iRQC): RNF10 acts by mediating monoubiquitination of RPS2/us5 and RPS3/us3, promoting their degradation by the proteasome. Also promotes ubiquitination of 40S ribosomal proteins in response to ribosome stalling during translation elongation. The action of RNF10 in iRQC is counteracted by USP10. May also act as a transcriptional factor involved in the regulation of MAG (Myelin-associated glycoprotein) expression. Acts as a regulator of Schwann cell differentiation and myelination. The polypeptide is E3 ubiquitin-protein ligase RNF10 (Homo sapiens (Human)).